A 132-amino-acid polypeptide reads, in one-letter code: Small ribosomal subunit protein uS8 (132 aa).

The protein belongs to the universal ribosomal protein uS8 family. Part of the 30S ribosomal subunit. Contacts proteins S5 and S12.

One of the primary rRNA binding proteins, it binds directly to 16S rRNA central domain where it helps coordinate assembly of the platform of the 30S subunit. This chain is Small ribosomal subunit protein uS8, found in Xylella fastidiosa (strain 9a5c).